The sequence spans 218 residues: Mitochondrial import inner membrane translocase subunit TIM17-1 (218 aa).

Transmembrane regions (helical) follow at residues 19–36, 66–82, 89–105, and 116–133; these read VGGA…YHLI, FSVW…ALVY, PWNS…FLSL, and ALVG…GIML.

This sequence belongs to the Tim17/Tim22/Tim23 family. As to quaternary structure, component of the TIM17:23 complex at least composed of TIM23, TIM17 and TIM50. The complex interacts with the TIM44 component of the PAM complex. As to expression, expressed in flowers, leaves and cotyledons, and at very low levels in roots.

The protein localises to the mitochondrion inner membrane. Its function is as follows. Essential component of the TIM17:23 complex, a complex that mediates the translocation of transit peptide-containing proteins across the mitochondrial inner membrane. Links the inner and outer membranes. This is Mitochondrial import inner membrane translocase subunit TIM17-1 (TIM17-1) from Arabidopsis thaliana (Mouse-ear cress).